An 85-amino-acid polypeptide reads, in one-letter code: Probable oxaloacetate decarboxylase gamma chain (85 aa).

The chain crosses the membrane as a helical span at residues 15 to 35 (ISGMGFVLLFLIVLIYAISFI).

Belongs to the OadG family. Heterotrimer of an alpha, a beta and a gamma subunit. Requires Na(+) as cofactor.

Its subcellular location is the cell membrane. The enzyme catalyses oxaloacetate + 2 Na(+)(in) + H(+) = pyruvate + 2 Na(+)(out) + CO2. Catalyzes the decarboxylation of oxaloacetate coupled to Na(+) translocation. This Actinobacillus pleuropneumoniae serotype 5b (strain L20) protein is Probable oxaloacetate decarboxylase gamma chain.